Reading from the N-terminus, the 406-residue chain is 3-oxoacyl-[acyl-carrier-protein] synthase 1 (406 aa).

In terms of domain architecture, Ketosynthase family 3 (KS3) spans 1–405 (MRRVVITGIG…GTNVSLIVKK (405 aa)). Catalysis depends on for beta-ketoacyl synthase activity residues C164, H299, and H335.

The protein belongs to the thiolase-like superfamily. Beta-ketoacyl-ACP synthases family. As to quaternary structure, homodimer.

It localises to the cytoplasm. The catalysed reaction is a fatty acyl-[ACP] + malonyl-[ACP] + H(+) = a 3-oxoacyl-[ACP] + holo-[ACP] + CO2. It catalyses the reaction (3Z)-decenoyl-[ACP] + malonyl-[ACP] + H(+) = 3-oxo-(5Z)-dodecenoyl-[ACP] + holo-[ACP] + CO2. Its pathway is lipid metabolism; fatty acid biosynthesis. In terms of biological role, involved in the type II fatty acid elongation cycle. Catalyzes the elongation of a wide range of acyl-ACP by the addition of two carbons from malonyl-ACP to an acyl acceptor. Can also use unsaturated fatty acids. Catalyzes a key reaction in unsaturated fatty acid (UFA) synthesis, the elongation of the cis-3-decenoyl-ACP produced by FabA. The polypeptide is 3-oxoacyl-[acyl-carrier-protein] synthase 1 (fabB) (Buchnera aphidicola subsp. Acyrthosiphon pisum (strain APS) (Acyrthosiphon pisum symbiotic bacterium)).